Consider the following 74-residue polypeptide: Exodeoxyribonuclease 7 small subunit (74 aa).

The protein belongs to the XseB family. In terms of assembly, heterooligomer composed of large and small subunits.

The protein resides in the cytoplasm. The enzyme catalyses Exonucleolytic cleavage in either 5'- to 3'- or 3'- to 5'-direction to yield nucleoside 5'-phosphates.. Bidirectionally degrades single-stranded DNA into large acid-insoluble oligonucleotides, which are then degraded further into small acid-soluble oligonucleotides. The sequence is that of Exodeoxyribonuclease 7 small subunit from Clostridium beijerinckii (strain ATCC 51743 / NCIMB 8052) (Clostridium acetobutylicum).